The following is a 42-amino-acid chain: Large ribosomal subunit protein eL32 (42 aa).

Belongs to the eukaryotic ribosomal protein eL32 family.

The protein is Large ribosomal subunit protein eL32 (RPL32) of Zea mays (Maize).